The sequence spans 166 residues: Large ribosomal subunit protein uL10 (166 aa).

Belongs to the universal ribosomal protein uL10 family. Part of the ribosomal stalk of the 50S ribosomal subunit. The N-terminus interacts with L11 and the large rRNA to form the base of the stalk. The C-terminus forms an elongated spine to which L12 dimers bind in a sequential fashion forming a multimeric L10(L12)X complex.

Forms part of the ribosomal stalk, playing a central role in the interaction of the ribosome with GTP-bound translation factors. The sequence is that of Large ribosomal subunit protein uL10 from Staphylococcus aureus (strain JH1).